The chain runs to 199 residues: Holliday junction branch migration complex subunit RuvA (199 aa).

The segment at Met1–Ala63 is domain I. The domain II stretch occupies residues Asp64 to Ser142. Residues Lys143–Asn151 are flexible linker. The segment at Asn151 to Ser199 is domain III.

It belongs to the RuvA family. As to quaternary structure, homotetramer. Forms an RuvA(8)-RuvB(12)-Holliday junction (HJ) complex. HJ DNA is sandwiched between 2 RuvA tetramers; dsDNA enters through RuvA and exits via RuvB. An RuvB hexamer assembles on each DNA strand where it exits the tetramer. Each RuvB hexamer is contacted by two RuvA subunits (via domain III) on 2 adjacent RuvB subunits; this complex drives branch migration. In the full resolvosome a probable DNA-RuvA(4)-RuvB(12)-RuvC(2) complex forms which resolves the HJ.

It is found in the cytoplasm. The RuvA-RuvB-RuvC complex processes Holliday junction (HJ) DNA during genetic recombination and DNA repair, while the RuvA-RuvB complex plays an important role in the rescue of blocked DNA replication forks via replication fork reversal (RFR). RuvA specifically binds to HJ cruciform DNA, conferring on it an open structure. The RuvB hexamer acts as an ATP-dependent pump, pulling dsDNA into and through the RuvAB complex. HJ branch migration allows RuvC to scan DNA until it finds its consensus sequence, where it cleaves and resolves the cruciform DNA. This is Holliday junction branch migration complex subunit RuvA from Cytophaga hutchinsonii (strain ATCC 33406 / DSM 1761 / CIP 103989 / NBRC 15051 / NCIMB 9469 / D465).